Here is a 730-residue protein sequence, read N- to C-terminus: Acetylene hydratase (730 aa).

Positions 9 and 12 each coordinate [4Fe-4S] cluster. Asp-13 is a catalytic residue. 2 residues coordinate [4Fe-4S] cluster: Cys-16 and Cys-46. Residues Lys-48, 111–114 (TEIN), Cys-141, 172–173 (KN), 177–179 (HNW), 199–202 (LDPR), 218–221 (YGTD), Ser-296, Gln-300, 416–418 (ASN), 422–423 (GY), 442–444 (YDQ), Asp-460, Arg-465, 602–613 (FAGLREDSNFQS), Arg-606, His-676, Asp-699, and Arg-720 each bind W-bis(molybdopterin guanine dinucleotide).

The protein belongs to the prokaryotic molybdopterin-containing oxidoreductase family. As to quaternary structure, monomer. Requires [4Fe-4S] cluster as cofactor. The cofactor is W-bis(molybdopterin guanine dinucleotide).

The enzyme catalyses acetaldehyde = acetylene + H2O. In terms of biological role, catalyzes the hydration of acetylene to form acetaldehyde. Ethylene cannot act as a substrate. The sequence is that of Acetylene hydratase from Syntrophotalea acetylenica (Pelobacter acetylenicus).